Reading from the N-terminus, the 384-residue chain is Probable L-aspartate decarboxylase (384 aa).

Lysine 233 bears the N6-(pyridoxal phosphate)lysine mark.

Belongs to the group II decarboxylase family. MfnA subfamily. Requires pyridoxal 5'-phosphate as cofactor.

It catalyses the reaction L-aspartate + H(+) = beta-alanine + CO2. The protein operates within cofactor biosynthesis; coenzyme A biosynthesis. Catalyzes the decarboxylation of L-aspartate to produce beta-alanine. The polypeptide is Probable L-aspartate decarboxylase (Pyrococcus abyssi (strain GE5 / Orsay)).